A 335-amino-acid polypeptide reads, in one-letter code: Beta-ketoacyl-[acyl-carrier-protein] synthase III (335 aa).

Catalysis depends on residues C120 and H261. Positions 262 to 266 (QANER) are ACP-binding. N291 is an active-site residue.

Belongs to the thiolase-like superfamily. FabH family. As to quaternary structure, homodimer.

Its subcellular location is the cytoplasm. It carries out the reaction malonyl-[ACP] + acetyl-CoA + H(+) = 3-oxobutanoyl-[ACP] + CO2 + CoA. Its pathway is lipid metabolism; fatty acid biosynthesis. Catalyzes the condensation reaction of fatty acid synthesis by the addition to an acyl acceptor of two carbons from malonyl-ACP. Catalyzes the first condensation reaction which initiates fatty acid synthesis and may therefore play a role in governing the total rate of fatty acid production. Possesses both acetoacetyl-ACP synthase and acetyl transacylase activities. Its substrate specificity determines the biosynthesis of branched-chain and/or straight-chain of fatty acids. The polypeptide is Beta-ketoacyl-[acyl-carrier-protein] synthase III (Chlamydia pneumoniae (Chlamydophila pneumoniae)).